A 317-amino-acid polypeptide reads, in one-letter code: D-alanine--D-alanine ligase (317 aa).

The ATP-grasp domain occupies 103–299 (KHIFHSLNID…FNELVKIIVE (197 aa)). 130 to 183 (KVDYPYVLKPINEGSSIGVHMIFSHEDYLELKNNSSTIMEKMIIEEYIPGIELH) is a binding site for ATP. 3 residues coordinate Mg(2+): Asp-251, Glu-265, and Asn-267.

It belongs to the D-alanine--D-alanine ligase family. Mg(2+) serves as cofactor. Requires Mn(2+) as cofactor.

The protein resides in the cytoplasm. It catalyses the reaction 2 D-alanine + ATP = D-alanyl-D-alanine + ADP + phosphate + H(+). Its pathway is cell wall biogenesis; peptidoglycan biosynthesis. In terms of biological role, cell wall formation. This chain is D-alanine--D-alanine ligase, found in Wolbachia pipientis subsp. Culex pipiens (strain wPip).